The following is an 88-amino-acid chain: Large ribosomal subunit protein bL27 (88 aa).

The disordered stretch occupies residues 1–21 (MAHKKGASSSRNGRDSAAQRL).

This sequence belongs to the bacterial ribosomal protein bL27 family.

The polypeptide is Large ribosomal subunit protein bL27 (Mycobacterium marinum (strain ATCC BAA-535 / M)).